The following is a 735-amino-acid chain: Muskelin (735 aa).

Ala-2 is modified (N-acetylalanine). A LisH domain is found at 172–204 (REQEAIRLCLKHFRQHNYTEAFESLQKKTKIAL). Residues 206 to 258 (HPMLTDMHDKLVLKGDFDACEELIEKAVNDGLFNQYISQQEYKPRWSQIIPKS) form the CTLH domain. 6 Kelch repeats span residues 284 to 330 (TVYL…SCHK), 339 to 391 (QIYT…FDHQ), 400 to 458 (MIYT…SRIG), 469 to 515 (CLYV…TGFT), 526 to 578 (EIHV…SLQE), and 597 to 651 (VHYL…AQMD).

As to quaternary structure, homodimer; may form higher oligomers. Identified in the CTLH complex that contains GID4, RANBP9 and/or RANBP10, MKLN1, MAEA, RMND5A (or alternatively its paralog RMND5B), GID8, ARMC8, WDR26 and YPEL5. Within this complex, MAEA, RMND5A (or alternatively its paralog RMND5B), GID8, WDR26, and RANBP9 and/or RANBP10 form the catalytic core, while GID4, MKLN1, ARMC8 and YPEL5 have ancillary roles. Interacts with RANBP9. Part of a complex consisting of RANBP9, MKLN1 and GID8. Interacts with GABRA1. Interacts with the C-terminal tail of PTGER3.

Its subcellular location is the cytoplasm. It localises to the cell projection. It is found in the ruffle. The protein localises to the cell cortex. The protein resides in the synapse. Its subcellular location is the postsynapse. Component of the CTLH E3 ubiquitin-protein ligase complex that selectively accepts ubiquitin from UBE2H and mediates ubiquitination and subsequent proteasomal degradation of the transcription factor HBP1. Required for internalization of the GABA receptor GABRA1 from the cell membrane via endosomes and subsequent GABRA1 degradation. Acts as a mediator of cell spreading and cytoskeletal responses to the extracellular matrix component THBS1. This Rattus norvegicus (Rat) protein is Muskelin (Mkln1).